We begin with the raw amino-acid sequence, 274 residues long: 2-amino-4,5-dihydroxy-6-oxo-7-(phosphonooxy)heptanoate synthase (274 aa).

Belongs to the DeoC/FbaB aldolase family. GriI subfamily. In terms of assembly, homodecamer.

The catalysed reaction is 2-amino-4,5-dihydroxy-6-oxo-7-(phosphooxy)heptanoate = L-aspartate 4-semialdehyde + dihydroxyacetone phosphate. Functionally, catalyzes aldol condensation between L-aspartate-4-semialdehyde (ASA) and dihydroxyacetone phosphate (DHAP), to form 2-amino-4,5-dihydroxy-6-oxo-7-(phosphonooxy)heptanoate. The sequence is that of 2-amino-4,5-dihydroxy-6-oxo-7-(phosphonooxy)heptanoate synthase (griI) from Streptomyces griseus subsp. griseus (strain JCM 4626 / CBS 651.72 / NBRC 13350 / KCC S-0626 / ISP 5235).